A 151-amino-acid chain; its full sequence is Large ribosomal subunit protein uL15 (151 aa).

Residues 1 to 60 (MAENSPLKAHNLRPAPGAKTAKTRVGRGEASKGKTAGRGTKGTKARYQVPERFEGGQMPL) form a disordered region.

It belongs to the universal ribosomal protein uL15 family. In terms of assembly, part of the 50S ribosomal subunit.

In terms of biological role, binds to the 23S rRNA. This chain is Large ribosomal subunit protein uL15, found in Streptomyces griseus subsp. griseus (strain JCM 4626 / CBS 651.72 / NBRC 13350 / KCC S-0626 / ISP 5235).